The chain runs to 453 residues: DDB1- and CUL4-associated factor 12 (453 aa).

Residues 1 to 12 (MARKVVSRKRKA) are compositionally biased toward basic residues. Positions 1-34 (MARKVVSRKRKAPASPGAGSDAQGPQFGWDHSLH) are disordered. The interval 1-38 (MARKVVSRKRKAPASPGAGSDAQGPQFGWDHSLHKRKR) is required for nuclear location and interaction with MOV10. Residue Ser15 is modified to Phosphoserine. WD repeat units lie at residues 81–122 (EREF…TSQI), 123–175 (TKIP…TLDP), 176–242 (VCVG…ALKD), 243–286 (IPKE…NTLS), 287–331 (KLLS…SYNV), and 332–366 (KSVC…LFYD).

It belongs to the WD repeat DCAF12 family. In terms of assembly, component of the DCX(DCAF12) E3 ubiquitin ligase complex, at least composed of CUL4 (CUL4A or CUL4B), DDB1, DCAF12 and RBX1. Highly expressed in lung cancer tissues and some cancer cell lines. Restricted expression in normal testis.

It is found in the cytoplasm. The protein resides in the cytoskeleton. Its subcellular location is the microtubule organizing center. The protein localises to the centrosome. It localises to the nucleus. It participates in protein modification; protein ubiquitination. Functionally, substrate-recognition component of a DCX (DDB1-CUL4-X-box) E3 ubiquitin-protein ligase complex of the DesCEND (destruction via C-end degrons) pathway, which recognizes a C-degron located at the extreme C terminus of target proteins, leading to their ubiquitination and degradation. The C-degron recognized by the DesCEND pathway is usually a motif of less than ten residues and can be present in full-length proteins, truncated proteins or proteolytically cleaved forms. The DCX(DCAF12) complex specifically recognizes proteins with a diglutamate (Glu-Glu) at the C-terminus, such as MAGEA3, MAGEA6 and CCT5, leading to their ubiquitination and degradation. Ubiquitination of MAGEA3, MAGEA6 by DCX(DCAF12) complex is required for starvation-induced autophagy. Also directly recognizes the C-terminal glutamate-leucine (Glu-Leu) degron as an alternative degron in proteins such as MOV10, leading to their ubiquitination and degradation. Controls the protein level of MOV10 during spermatogenesis and in T cells, especially after their activation. The chain is DDB1- and CUL4-associated factor 12 from Homo sapiens (Human).